The sequence spans 275 residues: Large ribosomal subunit protein uL2 (275 aa).

A disordered region spans residues 224–275 (AMNPVDHPHGGGEGKAPIGHPGPLTPWGKPALGYKTRKKGKASDKFIVKRRK). A compositionally biased stretch (basic and acidic residues) spans 264 to 275 (KASDKFIVKRRK).

It belongs to the universal ribosomal protein uL2 family. In terms of assembly, part of the 50S ribosomal subunit. Forms a bridge to the 30S subunit in the 70S ribosome.

Its function is as follows. One of the primary rRNA binding proteins. Required for association of the 30S and 50S subunits to form the 70S ribosome, for tRNA binding and peptide bond formation. It has been suggested to have peptidyltransferase activity; this is somewhat controversial. Makes several contacts with the 16S rRNA in the 70S ribosome. This Caldanaerobacter subterraneus subsp. tengcongensis (strain DSM 15242 / JCM 11007 / NBRC 100824 / MB4) (Thermoanaerobacter tengcongensis) protein is Large ribosomal subunit protein uL2.